The chain runs to 770 residues: Proprotein convertase subtilisin/kexin type 7 (770 aa).

The first 36 residues, 1 to 36, serve as a signal peptide directing secretion; sequence MPKGRQKVPHLDAHLGLPICLWLELAIFFLVPQVMG. Residues 37 to 140 constitute a propeptide that is removed on maturation; sequence LSEAGGLDIL…EQTLLKRAKR (104 aa). Residues 141–666 lie on the Extracellular side of the membrane; sequence SIHFNDPKYP…YTITPNTLKT (526 aa). Positions 152–472 constitute a Peptidase S8 domain; that stretch reads QWHLNNRRSP…FGLLNAWRLV (321 aa). Asparagine 166 and asparagine 174 each carry an N-linked (GlcNAc...) asparagine glycan. Aspartate 186 (charge relay system) is an active-site residue. The interval 195 to 228 is disordered; sequence DIAPNYSPEGSYDLNSNDPDPMPHPDEENGNHHG. Basic and acidic residues predominate over residues 215-225; that stretch reads PMPHPDEENGN. Catalysis depends on histidine 227, which acts as the Charge relay system. Asparagine 240 is a glycosylation site (N-linked (GlcNAc...) asparagine). Serine 405 (charge relay system) is an active-site residue. Residues 480 to 617 form the P/Homo B domain; the sequence is SVPYLASYVS…QLTLYGSMWS (138 aa). N-linked (GlcNAc...) asparagine glycosylation is present at asparagine 510. A helical membrane pass occupies residues 667 to 687; sequence LVLVGCFSVFWTIYYMLEVCL. Over 688 to 770 the chain is Cytoplasmic; the sequence is SQRNKASTHG…LLQGKSGQIC (83 aa).

It belongs to the peptidase S8 family. Ca(2+) is required as a cofactor. In terms of tissue distribution, widely expressed. Expressed in brain, lung, muscle, heart, liver, kidney, spleen and thymus.

The protein resides in the golgi apparatus. It localises to the trans-Golgi network membrane. Its activity is regulated as follows. Inhibited by zinc and copper. In terms of biological role, serine endoprotease that processes various proproteins by cleavage at paired basic amino acids, recognizing the RXXX[KR]R consensus motif. Likely functions in the constitutive secretory pathway. In Mus musculus (Mouse), this protein is Proprotein convertase subtilisin/kexin type 7 (Pcsk7).